Here is a 432-residue protein sequence, read N- to C-terminus: 3-phosphoshikimate 1-carboxyvinyltransferase (432 aa).

3-phosphoshikimate-binding residues include K23, S24, and R28. K23 serves as a coordination point for phosphoenolpyruvate. 2 residues coordinate phosphoenolpyruvate: G95 and R123. 3-phosphoshikimate is bound by residues S167, Q169, D317, and K344. Q169 serves as a coordination point for phosphoenolpyruvate. The active-site Proton acceptor is D317. Positions 348 and 390 each coordinate phosphoenolpyruvate.

Belongs to the EPSP synthase family. As to quaternary structure, monomer.

The protein resides in the cytoplasm. The enzyme catalyses 3-phosphoshikimate + phosphoenolpyruvate = 5-O-(1-carboxyvinyl)-3-phosphoshikimate + phosphate. It functions in the pathway metabolic intermediate biosynthesis; chorismate biosynthesis; chorismate from D-erythrose 4-phosphate and phosphoenolpyruvate: step 6/7. Functionally, catalyzes the transfer of the enolpyruvyl moiety of phosphoenolpyruvate (PEP) to the 5-hydroxyl of shikimate-3-phosphate (S3P) to produce enolpyruvyl shikimate-3-phosphate and inorganic phosphate. The polypeptide is 3-phosphoshikimate 1-carboxyvinyltransferase (Staphylococcus aureus (strain N315)).